A 138-amino-acid chain; its full sequence is Urease subunit beta (138 aa).

A disordered region spans residues 115–138 (RMRAAGFGDTGEAAPDDGDTESDQ). Acidic residues predominate over residues 128 to 138 (APDDGDTESDQ).

The protein belongs to the urease beta subunit family. In terms of assembly, heterotrimer of UreA (gamma), UreB (beta) and UreC (alpha) subunits. Three heterotrimers associate to form the active enzyme.

The protein localises to the cytoplasm. The catalysed reaction is urea + 2 H2O + H(+) = hydrogencarbonate + 2 NH4(+). The protein operates within nitrogen metabolism; urea degradation; CO(2) and NH(3) from urea (urease route): step 1/1. This is Urease subunit beta from Haloarcula marismortui (strain ATCC 43049 / DSM 3752 / JCM 8966 / VKM B-1809) (Halobacterium marismortui).